Reading from the N-terminus, the 314-residue chain is MIEIEKPKIETVELSEDAKYGKFVVEPLERGYGTTLGNSLRRILLSSLPGAAVTSVQIDGVLHEFSTIEGVVEDVTAIILNVKKLALKIYSDEEKTLEIDVQGEGVVTAADITHDSDVEILNPDLHIATLAEGGRLRMRMTARRGRGYVPAEANKREDQPIGVIPIDSIYTPVSRVSYQVENTRVGQVTDYDKLTIDVWTDGSIGPKEAISLGAKILTEHLNIFVGLTDEAQNAEIMVEKEDDQKEKVLEMTIEELDLSVRSYNCLKRAGINTVQELTQKTEEDMMKVRNLGRKSLEEVKAKLAELGLSLRKDD.

An alpha N-terminal domain (alpha-NTD) region spans residues 1-228 (MIEIEKPKIE…EHLNIFVGLT (228 aa)). The alpha C-terminal domain (alpha-CTD) stretch occupies residues 245 to 314 (KEKVLEMTIE…ELGLSLRKDD (70 aa)).

Belongs to the RNA polymerase alpha chain family. In terms of assembly, homodimer. The RNAP catalytic core consists of 2 alpha, 1 beta, 1 beta' and 1 omega subunit. When a sigma factor is associated with the core the holoenzyme is formed, which can initiate transcription.

The enzyme catalyses RNA(n) + a ribonucleoside 5'-triphosphate = RNA(n+1) + diphosphate. In terms of biological role, DNA-dependent RNA polymerase catalyzes the transcription of DNA into RNA using the four ribonucleoside triphosphates as substrates. This is DNA-directed RNA polymerase subunit alpha from Geobacillus thermodenitrificans (strain NG80-2).